We begin with the raw amino-acid sequence, 276 residues long: Stathmin domain-containing protein 1 (276 aa).

Disordered stretches follow at residues 1 to 40 (MGCG…ENCS), 61 to 106 (VQMG…RERQ), and 226 to 250 (GFEP…ATLI). A lipid anchor (N-myristoyl glycine) is attached at Gly2. 2 stretches are compositionally biased toward polar residues: residues 68-78 (GTISENSPSPS) and 87-100 (DLVT…PQSL). The region spanning 118–244 (QGIIQSHSKV…GKPLKRKKSK (127 aa)) is the SLD domain.

This is Stathmin domain-containing protein 1 (STMND1) from Homo sapiens (Human).